A 118-amino-acid chain; its full sequence is Small ribosomal subunit protein bS6 (118 aa).

The protein belongs to the bacterial ribosomal protein bS6 family.

Binds together with bS18 to 16S ribosomal RNA. In Orientia tsutsugamushi (strain Ikeda) (Rickettsia tsutsugamushi), this protein is Small ribosomal subunit protein bS6.